The sequence spans 489 residues: Beta-glucosidase 14 (489 aa).

An N-terminal signal peptide occupies residues 1-21 (MTSKYFSVLVFIILASNEVVA). Gln49 contributes to the a beta-D-glucoside binding site. The N-linked (GlcNAc...) asparagine glycan is linked to Asn80. Residues His153 and 198–199 (NE) contribute to the a beta-D-glucoside site. The active-site Proton donor is Glu199. Cys218 and Cys226 are disulfide-bonded. Asn225 is a glycosylation site (N-linked (GlcNAc...) asparagine). Tyr343 lines the a beta-D-glucoside pocket. N-linked (GlcNAc...) asparagine glycosylation occurs at Asn357. Residues Glu396, Trp441, 448–449 (EW), and Phe457 contribute to the a beta-D-glucoside site. Catalysis depends on Glu396, which acts as the Nucleophile.

The protein belongs to the glycosyl hydrolase 1 family.

It catalyses the reaction Hydrolysis of terminal, non-reducing beta-D-glucosyl residues with release of beta-D-glucose.. In Arabidopsis thaliana (Mouse-ear cress), this protein is Beta-glucosidase 14.